The following is a 685-amino-acid chain: DNA-directed RNA polymerase subunit beta' (685 aa).

Residues Cys-69, Cys-71, Cys-87, and Cys-90 each contribute to the Zn(2+) site. Residues Asp-492, Asp-494, and Asp-496 each coordinate Mg(2+).

Belongs to the RNA polymerase beta' chain family. RpoC1 subfamily. In plastids the minimal PEP RNA polymerase catalytic core is composed of four subunits: alpha, beta, beta', and beta''. When a (nuclear-encoded) sigma factor is associated with the core the holoenzyme is formed, which can initiate transcription. Mg(2+) serves as cofactor. Zn(2+) is required as a cofactor.

The protein resides in the plastid. Its subcellular location is the chloroplast. It carries out the reaction RNA(n) + a ribonucleoside 5'-triphosphate = RNA(n+1) + diphosphate. DNA-dependent RNA polymerase catalyzes the transcription of DNA into RNA using the four ribonucleoside triphosphates as substrates. The polypeptide is DNA-directed RNA polymerase subunit beta' (Dioscorea elephantipes (Elephant's foot yam)).